We begin with the raw amino-acid sequence, 228 residues long: Urease accessory protein UreH (228 aa).

Transmembrane regions (helical) follow at residues V48–M68, S79–L99, L130–S150, I162–I182, and A196–L216.

This sequence belongs to the NiCoT transporter (TC 2.A.52) family.

It is found in the cell membrane. Functionally, probably facilitates nickel incorporation. May constitute a multicomponent high-affinity nickel transporter. Not essential for the expression of catalytically active urease. The chain is Urease accessory protein UreH (ureH) from Bacillus sp. (strain TB-90).